Consider the following 288-residue polypeptide: Acetyl-coenzyme A carboxylase carboxyl transferase subunit beta (288 aa).

Positions Leu-34–Gln-288 constitute a CoA carboxyltransferase N-terminal domain. Cys-38, Cys-41, Cys-56, and Cys-59 together coordinate Zn(2+). The C4-type zinc finger occupies Cys-38–Cys-59.

The protein belongs to the AccD/PCCB family. In terms of assembly, acetyl-CoA carboxylase is a heterohexamer composed of biotin carboxyl carrier protein (AccB), biotin carboxylase (AccC) and two subunits each of ACCase subunit alpha (AccA) and ACCase subunit beta (AccD). Zn(2+) is required as a cofactor.

The protein resides in the cytoplasm. The catalysed reaction is N(6)-carboxybiotinyl-L-lysyl-[protein] + acetyl-CoA = N(6)-biotinyl-L-lysyl-[protein] + malonyl-CoA. It functions in the pathway lipid metabolism; malonyl-CoA biosynthesis; malonyl-CoA from acetyl-CoA: step 1/1. Component of the acetyl coenzyme A carboxylase (ACC) complex. Biotin carboxylase (BC) catalyzes the carboxylation of biotin on its carrier protein (BCCP) and then the CO(2) group is transferred by the transcarboxylase to acetyl-CoA to form malonyl-CoA. In Streptococcus thermophilus (strain CNRZ 1066), this protein is Acetyl-coenzyme A carboxylase carboxyl transferase subunit beta.